We begin with the raw amino-acid sequence, 329 residues long: 4-hydroxythreonine-4-phosphate dehydrogenase (329 aa).

2 residues coordinate substrate: H136 and T137. A divalent metal cation contacts are provided by H166, H211, and H266. Residues K274, N283, and R292 each contribute to the substrate site.

It belongs to the PdxA family. Homodimer. The cofactor is Zn(2+). Mg(2+) is required as a cofactor. It depends on Co(2+) as a cofactor.

The protein resides in the cytoplasm. The enzyme catalyses 4-(phosphooxy)-L-threonine + NAD(+) = 3-amino-2-oxopropyl phosphate + CO2 + NADH. The protein operates within cofactor biosynthesis; pyridoxine 5'-phosphate biosynthesis; pyridoxine 5'-phosphate from D-erythrose 4-phosphate: step 4/5. Its function is as follows. Catalyzes the NAD(P)-dependent oxidation of 4-(phosphooxy)-L-threonine (HTP) into 2-amino-3-oxo-4-(phosphooxy)butyric acid which spontaneously decarboxylates to form 3-amino-2-oxopropyl phosphate (AHAP). The chain is 4-hydroxythreonine-4-phosphate dehydrogenase from Neisseria meningitidis serogroup A / serotype 4A (strain DSM 15465 / Z2491).